Consider the following 307-residue polypeptide: Dihydroorotate dehydrogenase B (NAD(+)), catalytic subunit (307 aa).

Residues serine 22 and 46 to 47 each bind FMN; that span reads KT. Substrate-binding positions include lysine 46, 70-74, and asparagine 128; that span reads NAVGL. Asparagine 128 contacts FMN. Cysteine 131 functions as the Nucleophile in the catalytic mechanism. FMN contacts are provided by lysine 166 and isoleucine 192. Position 193–194 (193–194) interacts with substrate; the sequence is NT. FMN is bound by residues glycine 218, 244-245, and 266-267; these read GG and GT.

This sequence belongs to the dihydroorotate dehydrogenase family. Type 1 subfamily. Heterotetramer of 2 PyrK and 2 PyrD type B subunits. The cofactor is FMN.

The protein resides in the cytoplasm. The enzyme catalyses (S)-dihydroorotate + NAD(+) = orotate + NADH + H(+). The protein operates within pyrimidine metabolism; UMP biosynthesis via de novo pathway; orotate from (S)-dihydroorotate (NAD(+) route): step 1/1. Its function is as follows. Catalyzes the conversion of dihydroorotate to orotate with NAD(+) as electron acceptor. The protein is Dihydroorotate dehydrogenase B (NAD(+)), catalytic subunit (pyrD) of Desulforudis audaxviator (strain MP104C).